Reading from the N-terminus, the 215-residue chain is Probable transaldolase (215 aa).

Lys-83 acts as the Schiff-base intermediate with substrate in catalysis.

The protein belongs to the transaldolase family. Type 3B subfamily.

The protein localises to the cytoplasm. The catalysed reaction is D-sedoheptulose 7-phosphate + D-glyceraldehyde 3-phosphate = D-erythrose 4-phosphate + beta-D-fructose 6-phosphate. The protein operates within carbohydrate degradation; pentose phosphate pathway; D-glyceraldehyde 3-phosphate and beta-D-fructose 6-phosphate from D-ribose 5-phosphate and D-xylulose 5-phosphate (non-oxidative stage): step 2/3. Transaldolase is important for the balance of metabolites in the pentose-phosphate pathway. This is Probable transaldolase (tal) from Clostridium acetobutylicum (strain ATCC 824 / DSM 792 / JCM 1419 / IAM 19013 / LMG 5710 / NBRC 13948 / NRRL B-527 / VKM B-1787 / 2291 / W).